A 453-amino-acid chain; its full sequence is tRNA modification GTPase MnmE (453 aa).

3 residues coordinate (6S)-5-formyl-5,6,7,8-tetrahydrofolate: Arg22, Glu79, and Lys119. Residues 215–376 (GMKVVIAGRP…LRNHLKECMG (162 aa)) enclose the TrmE-type G domain. Asn225 is a K(+) binding site. GTP is bound by residues 225–230 (NAGKSS), 244–250 (TDIAGTT), 269–272 (DTAG), and 334–337 (NKAD). Mg(2+) is bound at residue Ser229. Residues Thr244, Ile246, and Thr249 each contribute to the K(+) site. Thr250 contributes to the Mg(2+) binding site. Residue Lys453 participates in (6S)-5-formyl-5,6,7,8-tetrahydrofolate binding.

Belongs to the TRAFAC class TrmE-Era-EngA-EngB-Septin-like GTPase superfamily. TrmE GTPase family. In terms of assembly, homodimer. Heterotetramer of two MnmE and two MnmG subunits. K(+) is required as a cofactor.

It is found in the cytoplasm. In terms of biological role, exhibits a very high intrinsic GTPase hydrolysis rate. Involved in the addition of a carboxymethylaminomethyl (cmnm) group at the wobble position (U34) of certain tRNAs, forming tRNA-cmnm(5)s(2)U34. In Vibrio parahaemolyticus serotype O3:K6 (strain RIMD 2210633), this protein is tRNA modification GTPase MnmE.